The chain runs to 463 residues: GTPase Der (463 aa).

2 EngA-type G domains span residues 2 to 164 and 198 to 369; these read KKII…PKSK and IKIG…KNYT. GTP contacts are provided by residues 8–15, 55–59, 116–119, 204–211, 251–255, and 315–318; these read GRPNVGKS, DSGGL, NKVD, GRVNVGKS, DTAGI, and NKWD. One can recognise a KH-like domain in the interval 370–454; sequence QKMKTSRLNE…PVILIPKNRS (85 aa).

This sequence belongs to the TRAFAC class TrmE-Era-EngA-EngB-Septin-like GTPase superfamily. EngA (Der) GTPase family. Associates with the 50S ribosomal subunit.

Its function is as follows. GTPase that plays an essential role in the late steps of ribosome biogenesis. The sequence is that of GTPase Der from Campylobacter fetus subsp. fetus (strain 82-40).